The following is a 1226-amino-acid chain: DNA-directed RNA polymerase subunit beta (1226 aa).

The protein belongs to the RNA polymerase beta chain family. In terms of assembly, the RNAP catalytic core consists of 2 alpha, 1 beta, 1 beta' and 1 omega subunit. When a sigma factor is associated with the core the holoenzyme is formed, which can initiate transcription.

It catalyses the reaction RNA(n) + a ribonucleoside 5'-triphosphate = RNA(n+1) + diphosphate. In terms of biological role, DNA-dependent RNA polymerase catalyzes the transcription of DNA into RNA using the four ribonucleoside triphosphates as substrates. The chain is DNA-directed RNA polymerase subunit beta from Leptospira interrogans serogroup Icterohaemorrhagiae serovar copenhageni (strain Fiocruz L1-130).